A 122-amino-acid polypeptide reads, in one-letter code: Large ribosomal subunit protein uL14 (122 aa).

This sequence belongs to the universal ribosomal protein uL14 family. Part of the 50S ribosomal subunit. Forms a cluster with proteins L3 and L19. In the 70S ribosome, L14 and L19 interact and together make contacts with the 16S rRNA in bridges B5 and B8.

Functionally, binds to 23S rRNA. Forms part of two intersubunit bridges in the 70S ribosome. This is Large ribosomal subunit protein uL14 from Afipia carboxidovorans (strain ATCC 49405 / DSM 1227 / KCTC 32145 / OM5) (Oligotropha carboxidovorans).